Consider the following 283-residue polypeptide: Pantothenate synthetase (283 aa).

30–37 contributes to the ATP binding site; that stretch reads MGNLHDGH. Residue His37 is the Proton donor of the active site. Gln61 is a binding site for (R)-pantoate. Gln61 provides a ligand contact to beta-alanine. 149–152 contributes to the ATP binding site; sequence GEKD. Gln155 contacts (R)-pantoate. ATP is bound at residue 186–189; that stretch reads LSSR.

It belongs to the pantothenate synthetase family. Homodimer.

Its subcellular location is the cytoplasm. The enzyme catalyses (R)-pantoate + beta-alanine + ATP = (R)-pantothenate + AMP + diphosphate + H(+). It participates in cofactor biosynthesis; (R)-pantothenate biosynthesis; (R)-pantothenate from (R)-pantoate and beta-alanine: step 1/1. Catalyzes the condensation of pantoate with beta-alanine in an ATP-dependent reaction via a pantoyl-adenylate intermediate. The polypeptide is Pantothenate synthetase (Escherichia coli O45:K1 (strain S88 / ExPEC)).